Here is a 1449-residue protein sequence, read N- to C-terminus: Gag-Pol polyprotein (1449 aa).

A lipid anchor (N-myristoyl glycine; by host) is attached at Gly2. The Nuclear export signal signature appears at 16-22; sequence LEKIRLR. Positions 26–32 match the Nuclear localization signal motif; sequence KKRYQLK. 2 consecutive CCHC-type zinc fingers follow at residues 392 to 409 and 413 to 430; these read IKCW…QCRA and QGCW…KCPE. The interval 442–494 is disordered; sequence GKEAPQFPHGPDASGADTNCSPRGSSCGSTEELHEDGQKAEGEQRETLQGGNG. Residues 457 to 470 show a composition bias toward polar residues; it reads ADTNCSPRGSSCGS. A compositionally biased stretch (basic and acidic residues) spans 472-487; the sequence is EELHEDGQKAEGEQRE. One can recognise a Peptidase A2 domain in the interval 518 to 587; that stretch reads VEVLLDTGAD…TPINIFGRNL (70 aa). Asp523 functions as the For protease activity; shared with dimeric partner in the catalytic mechanism. Residues 641 to 831 enclose the Reverse transcriptase domain; it reads DGQLEEAPPT…PPFQWMGYEL (191 aa). Mg(2+)-binding residues include Asp707, Asp782, and Asp783. The interval 824-832 is RT 'primer grip'; that stretch reads FQWMGYELW. Positions 994–1010 match the Tryptophan repeat motif motif; it reads WEQWWTDYWQVTWIPEW. The RNase H type-1 domain maps to 1030–1153; that stretch reads IQGAETFYVD…VDHLVSQGIR (124 aa). Asp1039, Glu1074, Asp1094, and Asp1145 together coordinate Mg(2+). The segment at 1159–1200 adopts an Integrase-type zinc-finger fold; the sequence is EKIEPAQEEHEKYHSNVKELVFKFGLPRLVAKQIVDTCDKCH. Zn(2+) is bound by residues His1168, His1172, Cys1196, and Cys1199. The 151-residue stretch at 1210-1360 folds into the Integrase catalytic domain; that stretch reads VNAELGTWQM…TPAERLVNMI (151 aa). Residues Asp1220 and Asp1272 each coordinate Mg(2+). A DNA-binding region (integrase-type) is located at residues 1379–1426; the sequence is FRVYYREGRDQLWKGPGELLWKGEGAVILKVGTEIKVVPRRKAKIIKD.

Homotrimer. Interacts with gp41 (via C-terminus). As to quaternary structure, homodimer. The active site consists of two apposed aspartic acid residues. In terms of assembly, heterodimer of p66 RT and p51 RT (RT p66/p51). Heterodimerization of RT is essential for DNA polymerase activity. Despite the sequence identities, p66 RT and p51 RT have distinct folding. Homotetramer; may further associate as a homohexadecamer. Requires Mg(2+) as cofactor. Post-translationally, specific enzymatic cleavages by the viral protease yield mature proteins. The protease is released by autocatalytic cleavage. The polyprotein is cleaved during and after budding, this process is termed maturation. Proteolytic cleavage of p66 RT removes the RNase H domain to yield the p51 RT subunit. Capsid protein p24 is phosphorylated.

The protein localises to the virion. The protein resides in the host nucleus. It localises to the host cytoplasm. It is found in the host cell membrane. The enzyme catalyses Specific for a P1 residue that is hydrophobic, and P1' variable, but often Pro.. The catalysed reaction is Endohydrolysis of RNA in RNA/DNA hybrids. Three different cleavage modes: 1. sequence-specific internal cleavage of RNA. Human immunodeficiency virus type 1 and Moloney murine leukemia virus enzymes prefer to cleave the RNA strand one nucleotide away from the RNA-DNA junction. 2. RNA 5'-end directed cleavage 13-19 nucleotides from the RNA end. 3. DNA 3'-end directed cleavage 15-20 nucleotides away from the primer terminus.. It catalyses the reaction 3'-end directed exonucleolytic cleavage of viral RNA-DNA hybrid.. It carries out the reaction DNA(n) + a 2'-deoxyribonucleoside 5'-triphosphate = DNA(n+1) + diphosphate. The viral protease is inhibited by many synthetic protease inhibitors (PIs), such as amprenavir, atazanavir, indinavir, loprinavir, nelfinavir, ritonavir and saquinavir. RT can be inhibited either by nucleoside RT inhibitors (NRTIs) or by non nucleoside RT inhibitors (NNRTIs). NRTIs act as chain terminators, whereas NNRTIs inhibit DNA polymerization by binding a small hydrophobic pocket near the RT active site and inducing an allosteric change in this region. Classical NRTIs are abacavir, adefovir (PMEA), didanosine (ddI), lamivudine (3TC), stavudine (d4T), tenofovir (PMPA), zalcitabine (ddC), and zidovudine (AZT). Classical NNRTIs are atevirdine (BHAP U-87201E), delavirdine, efavirenz (DMP-266), emivirine (I-EBU), and nevirapine (BI-RG-587). The tritherapies used as a basic effective treatment of AIDS associate two NRTIs and one NNRTI. Use of protease inhibitors in tritherapy regimens permit more ambitious therapeutic strategies. In terms of biological role, gag-Pol polyprotein and Gag polyprotein may regulate their own translation, by the binding genomic RNA in the 5'-UTR. At low concentration, Gag-Pol and Gag would promote translation, whereas at high concentration, the polyproteins encapsidate genomic RNA and then shut off translation. Matrix protein p17 has two main functions: in infected cell, it targets Gag and Gag-pol polyproteins to the plasma membrane via a multipartite membrane-binding signal, that includes its myristointegration complex. The myristoylation signal and the NLS exert conflicting influences its subcellular localization. The key regulation of these motifs might be phosphorylation of a portion of MA molecules on the C-terminal tyrosine at the time of virus maturation, by virion-associated cellular tyrosine kinase. Implicated in the release from host cell mediated by Vpu. Functionally, capsid protein p24 forms the conical core that encapsulates the genomic RNA-nucleocapsid complex in the virion. The core is constituted by capsid protein hexamer subunits. The core is disassembled soon after virion entry. Interaction with host PPIA/CYPA protects the virus from restriction by host TRIM5-alpha and from an unknown antiviral activity in host cells. This capsid restriction by TRIM5 is one of the factors which restricts SIV to the simian species. Its function is as follows. Nucleocapsid protein p7 encapsulates and protects viral dimeric unspliced (genomic) RNA. Binds these RNAs through its zinc fingers. Facilitates rearangement of nucleic acid secondary structure during retrotranscription of genomic RNA. This capability is referred to as nucleic acid chaperone activity. In terms of biological role, the aspartyl protease mediates proteolytic cleavages of Gag and Gag-Pol polyproteins during or shortly after the release of the virion from the plasma membrane. Cleavages take place as an ordered, step-wise cascade to yield mature proteins. This process is called maturation. Displays maximal activity during the budding process just prior to particle release from the cell. Also cleaves Nef and Vif, probably concomitantly with viral structural proteins on maturation of virus particles. Hydrolyzes host EIF4GI and PABP1 in order to shut off the capped cellular mRNA translation. The resulting inhibition of cellular protein synthesis serves to ensure maximal viral gene expression and to evade host immune response. Reverse transcriptase/ribonuclease H (RT) is a multifunctional enzyme that converts the viral dimeric RNA genome into dsDNA in the cytoplasm, shortly after virus entry into the cell. This enzyme displays a DNA polymerase activity that can copy either DNA or RNA templates, and a ribonuclease H (RNase H) activity that cleaves the RNA strand of RNA-DNA heteroduplexes in a partially processive 3' to 5' endonucleasic mode. Conversion of viral genomic RNA into dsDNA requires many steps. A tRNA binds to the primer-binding site (PBS) situated at the 5'-end of the viral RNA. RT uses the 3' end of the tRNA primer to perform a short round of RNA-dependent minus-strand DNA synthesis. The reading proceeds through the U5 region and ends after the repeated (R) region which is present at both ends of viral RNA. The portion of the RNA-DNA heteroduplex is digested by the RNase H, resulting in a ssDNA product attached to the tRNA primer. This ssDNA/tRNA hybridizes with the identical R region situated at the 3' end of viral RNA. This template exchange, known as minus-strand DNA strong stop transfer, can be either intra- or intermolecular. RT uses the 3' end of this newly synthesized short ssDNA to perform the RNA-dependent minus-strand DNA synthesis of the whole template. RNase H digests the RNA template except for two polypurine tracts (PPTs) situated at the 5'-end and near the center of the genome. It is not clear if both polymerase and RNase H activities are simultaneous. RNase H can probably proceed both in a polymerase-dependent (RNA cut into small fragments by the same RT performing DNA synthesis) and a polymerase-independent mode (cleavage of remaining RNA fragments by free RTs). Secondly, RT performs DNA-directed plus-strand DNA synthesis using the PPTs that have not been removed by RNase H as primers. PPTs and tRNA primers are then removed by RNase H. The 3' and 5' ssDNA PBS regions hybridize to form a circular dsDNA intermediate. Strand displacement synthesis by RT to the PBS and PPT ends produces a blunt ended, linear dsDNA copy of the viral genome that includes long terminal repeats (LTRs) at both ends. Functionally, integrase catalyzes viral DNA integration into the host chromosome, by performing a series of DNA cutting and joining reactions. This enzyme activity takes place after virion entry into a cell and reverse transcription of the RNA genome in dsDNA. The first step in the integration process is 3' processing. This step requires a complex comprising the viral genome, matrix protein, Vpr and integrase. This complex is called the pre-integration complex (PIC). The integrase protein removes 2 nucleotides from each 3' end of the viral DNA, leaving recessed CA OH's at the 3' ends. In the second step, the PIC enters cell nucleus. This process is mediated through integrase and Vpr proteins, and allows the virus to infect a non dividing cell. This ability to enter the nucleus is specific of lentiviruses, other retroviruses cannot and rely on cell division to access cell chromosomes. In the third step, termed strand transfer, the integrase protein joins the previously processed 3' ends to the 5' ends of strands of target cellular DNA at the site of integration. The 5'-ends are produced by integrase-catalyzed staggered cuts, 5 bp apart. A Y-shaped, gapped, recombination intermediate results, with the 5'-ends of the viral DNA strands and the 3' ends of target DNA strands remaining unjoined, flanking a gap of 5 bp. The last step is viral DNA integration into host chromosome. This involves host DNA repair synthesis in which the 5 bp gaps between the unjoined strands are filled in and then ligated. Since this process occurs at both cuts flanking the SIV genome, a 5 bp duplication of host DNA is produced at the ends of SIV integration. Alternatively, Integrase may catalyze the excision of viral DNA just after strand transfer, this is termed disintegration. The chain is Gag-Pol polyprotein (gag-pol) from Cercopithecidae (Old World monkeys).